The sequence spans 250 residues: MADS-box protein J2 (250 aa).

Positions 1–61 (MGRGRVELKR…GKLYEFSSAS (61 aa)) constitute an MADS-box domain. One can recognise a K-box domain in the interval 87–177 (TQMNYNEYVR…KNKLEESAAR (91 aa)).

It localises to the nucleus. MADS-box transcription factor that acts redundantly with EJ2 to control meristem maturation and inflorescence architecture. This is MADS-box protein J2 from Solanum lycopersicum (Tomato).